The chain runs to 173 residues: ATP synthase subunit d, mitochondrial (173 aa).

Residues 1-23 constitute a mitochondrion transit peptide; that stretch reads MAARSAALKIDWVKVTSSLGLRG.

Belongs to the ATPase d subunit family. In terms of assembly, F-type ATPases have 2 components, CF(1) - the catalytic core - and CF(0) - the membrane proton channel. In yeast, the dimeric form of ATP synthase consists of 17 polypeptides: alpha, beta, gamma, delta, epsilon, 4 (B), 5 (OSCP), 6 (A), 8, 9 (C), d, E (Tim11), f, g, h, i/j and k.

It localises to the mitochondrion inner membrane. Its function is as follows. Mitochondrial membrane ATP synthase (F(1)F(0) ATP synthase or Complex V) produces ATP from ADP in the presence of a proton gradient across the membrane which is generated by electron transport complexes of the respiratory chain. F-type ATPases consist of two structural domains, F(1) - containing the extramembraneous catalytic core, and F(0) - containing the membrane proton channel, linked together by a central stalk and a peripheral stalk. During catalysis, ATP synthesis in the catalytic domain of F(1) is coupled via a rotary mechanism of the central stalk subunits to proton translocation. Part of the complex F(0) domain and the peripheric stalk, which acts as a stator to hold the catalytic alpha(3)beta(3) subcomplex and subunit a/ATP6 static relative to the rotary elements. The chain is ATP synthase subunit d, mitochondrial (atp7) from Aspergillus terreus (strain NIH 2624 / FGSC A1156).